Reading from the N-terminus, the 453-residue chain is tRNA hydroxylation protein P (453 aa).

Belongs to the peptidase U32 family.

Its function is as follows. Involved in prephenate-dependent formation of 5-hydroxyuridine (ho5U) modification at position 34 in tRNAs, the first step in 5-carboxymethoxyuridine (cmo5U) biosynthesis. Involved differently in ho5U formation in each tRNA; tRNA(Leu3) and tRNA(Pro3) are major targets of TrhP. This is tRNA hydroxylation protein P from Escherichia coli (strain K12).